A 646-amino-acid chain; its full sequence is Lipoteichoic acid synthase (646 aa).

Residues 1–7 (MKLHKKK) are Cytoplasmic-facing. Residues 8–28 (LTLFAFFILTVLTVTLKTYFS) traverse the membrane as a helical segment. The Extracellular segment spans residues 29-43 (YYVDFSLGVKGLVQN). A helical membrane pass occupies residues 44–64 (LILLMNPYSLIALVLSIFLFF). The Cytoplasmic portion of the chain corresponds to 65-68 (KGKK). Residues 69–89 (AFWFIFIGGFILTFLLYANVV) traverse the membrane as a helical segment. Topologically, residues 90-119 (YFRFFSDFLTFSTLNQAGNVESMGGAVTAS) are extracellular. A helical transmembrane segment spans residues 120-140 (FKWYDFVYFIDTIIYLFVLIF). Residues 141–153 (KQKWLDKRVFSKK) lie on the Cytoplasmic side of the membrane. Residues 154 to 174 (FVPVVMAASIALFFLNLAFAE) traverse the membrane as a helical segment. Residues 175 to 646 (SDRPELLTRT…KTGPKGQERK (472 aa)) are Extracellular-facing. The Mn(2+) site is built by E255 and T300. The active site involves T300. Position 416 (H416) interacts with substrate. Positions 475 and 476 each coordinate Mn(2+). The interval 579–646 (IYDNKNNEPM…KTGPKGQERK (68 aa)) is disordered. Composition is skewed to basic and acidic residues over residues 580-607 (YDNK…KDLQ) and 625-646 (DFDK…QERK).

It belongs to the LTA synthase family. In terms of processing, proteolytically cleaved.

The protein resides in the cell membrane. It is found in the secreted. Its pathway is cell wall biogenesis; lipoteichoic acid biosynthesis. Catalyzes the polymerization of lipoteichoic acid (LTA) polyglycerol phosphate, a reaction that presumably uses phosphatidylglycerol (PG) as substrate. Is required for staphylococcal growth and cell division process. This Staphylococcus saprophyticus subsp. saprophyticus (strain ATCC 15305 / DSM 20229 / NCIMB 8711 / NCTC 7292 / S-41) protein is Lipoteichoic acid synthase (ltaS).